The sequence spans 138 residues: UPF0047 protein MJ1081 (138 aa).

It belongs to the UPF0047 family.

The polypeptide is UPF0047 protein MJ1081 (Methanocaldococcus jannaschii (strain ATCC 43067 / DSM 2661 / JAL-1 / JCM 10045 / NBRC 100440) (Methanococcus jannaschii)).